The sequence spans 498 residues: MNLNRQYVNRFIDDAIQYGDYEREDNYYLQNLILEITKAESIDETKNNNGLVNPTSNEIAQFWIQQMLNNGLLEDVVYQKEIVETKLLDLITPKPSTINREFWKRYESHPEKATGYFYQICKRNHYVKEDAIAKNIHYYTETEYGDLEITINLSKPEKDAKEIAKAREAKQSSYPANALCMENEGFVGSVTQAARRNHRIVRLNLNHQPWGFQFSPYAYFPEHSIVLSEAHEPMKIEKQTFSNLLQFVQKFPHYFAGSNADLPIVGGSILSHNHYQTGRHTFPMDHAPEMKQFKMEQFPDVQAAILKWPMSVIRLKGEDLDEMTEAADHIFETWKSYTDEKLDIRAYSQDGTRHHTVTPIARFNQTTSEYELDLVLRDNQTSTQYPDGIFHPHNDVHHIKKENIGLIEVMGTAILPGRLKKELLEVERYVLGDINAEPGSHKKWADKMKEKYNFNNENAKNIIHQEVGRIFKRVLEDSGVFKQSTEGQKGFEKFIQTL.

The protein belongs to the galactose-1-phosphate uridylyltransferase type 2 family.

It localises to the cytoplasm. The catalysed reaction is alpha-D-galactose 1-phosphate + UDP-alpha-D-glucose = alpha-D-glucose 1-phosphate + UDP-alpha-D-galactose. It functions in the pathway carbohydrate metabolism; galactose metabolism. This is Galactose-1-phosphate uridylyltransferase from Staphylococcus carnosus (strain TM300).